The following is a 456-amino-acid chain: Enolase (456 aa).

Glutamine 169 serves as a coordination point for (2R)-2-phosphoglycerate. Residue glutamate 211 is the Proton donor of the active site. Residues aspartate 252, glutamate 314, and aspartate 341 each coordinate Mg(2+). The (2R)-2-phosphoglycerate site is built by lysine 366, arginine 395, serine 396, and lysine 417. The Proton acceptor role is filled by lysine 366.

This sequence belongs to the enolase family. Mg(2+) is required as a cofactor.

The protein resides in the cytoplasm. It is found in the secreted. The protein localises to the cell surface. The enzyme catalyses (2R)-2-phosphoglycerate = phosphoenolpyruvate + H2O. It participates in carbohydrate degradation; glycolysis; pyruvate from D-glyceraldehyde 3-phosphate: step 4/5. Its function is as follows. Catalyzes the reversible conversion of 2-phosphoglycerate (2-PG) into phosphoenolpyruvate (PEP). It is essential for the degradation of carbohydrates via glycolysis. The sequence is that of Enolase from Metamycoplasma arthritidis (strain 158L3-1) (Mycoplasma arthritidis).